Here is a 147-residue protein sequence, read N- to C-terminus: Large ribosomal subunit protein uL13 (147 aa).

Belongs to the universal ribosomal protein uL13 family. Part of the 50S ribosomal subunit.

In terms of biological role, this protein is one of the early assembly proteins of the 50S ribosomal subunit, although it is not seen to bind rRNA by itself. It is important during the early stages of 50S assembly. The polypeptide is Large ribosomal subunit protein uL13 (Mycobacterium leprae (strain Br4923)).